Here is a 260-residue protein sequence, read N- to C-terminus: Large ribosomal subunit protein uL2y (260 aa).

Positions 227-248 are disordered; the sequence is RRDKSAGAKVGQIAARRTGRRR.

The protein belongs to the universal ribosomal protein uL2 family.

This is Large ribosomal subunit protein uL2y (RPL8B) from Arabidopsis thaliana (Mouse-ear cress).